The chain runs to 250 residues: 5-oxoprolinase subunit A (250 aa).

The protein belongs to the LamB/PxpA family. Forms a complex composed of PxpA, PxpB and PxpC.

It carries out the reaction 5-oxo-L-proline + ATP + 2 H2O = L-glutamate + ADP + phosphate + H(+). In terms of biological role, catalyzes the cleavage of 5-oxoproline to form L-glutamate coupled to the hydrolysis of ATP to ADP and inorganic phosphate. This Staphylococcus aureus (strain MW2) protein is 5-oxoprolinase subunit A.